A 196-amino-acid chain; its full sequence is Signaling threshold-regulating transmembrane adapter 1 (196 aa).

The signal sequence occupies residues 1–24 (MNQADPRLRAVCLWTLTSAAMSRG). The Extracellular portion of the chain corresponds to 25-40 (DNCTDLLALGIPSITQ). N-linked (GlcNAc...) asparagine glycosylation is present at Asn-26. The helical transmembrane segment at 41-61 (AWGLWVLLGAVTLLFLISLAA) threads the bilayer. Topologically, residues 62–196 (HLSQWTRGRS…AYANSQPAAS (135 aa)) are cytoplasmic. Residues Ser-80 and Ser-83 each carry the phosphoserine modification. Tyr-90 is subject to Phosphotyrosine. Residues 90-93 (YGNL) form an interaction with GRB2 region. The residue at position 102 (Ser-102) is a Phosphoserine. Residue Tyr-127 is modified to Phosphotyrosine. The interval 132–167 (LRPPQGRIPGPGTPVKYSEVVLDSEPKSQASGPEPE) is disordered. Thr-144 is modified (phosphothreonine). Residues 146-151 (VKYSEV) are interaction with PTPN11. A phosphotyrosine mark is found at Tyr-148 and Tyr-169. The interval 169–172 (YASV) is interaction with CSK. Ser-182 bears the Phosphoserine mark. A Phosphotyrosine modification is found at Tyr-188. The segment at 188-191 (YANS) is interaction with GRB2.

As to quaternary structure, homodimer; disulfide-linked. When phosphorylated, interacts with PTPN11/SHP2, GRB2 and CSK. Post-translationally, phosphorylated on tyrosines by LCK, FYN or ZAP70 upon TCR activation; which leads to the recruitment of PTPN11, GRB2 and CSK. Specifically expressed in T- and B-cells. Present in plasma cells but not in germinal center B-cells (at protein level). Expressed in T- and B-cell lymphoma.

The protein localises to the cell membrane. In terms of biological role, negatively regulates TCR (T-cell antigen receptor)-mediated signaling in T-cells. Involved in positive selection of T-cells. This Homo sapiens (Human) protein is Signaling threshold-regulating transmembrane adapter 1 (SIT1).